We begin with the raw amino-acid sequence, 120 residues long: MAVCIIDHDNIRGVIYFEPVHGKDKVLGSVIGLKSGTYSLIIHRYGDISRGCDSIGSPEIFIGNIFVNRYGVAYVYLDTDVNISTIIGKALSISKNDQRLACGVIGISYINEKNNTFSYN.

Cysteines 52 and 102 form a disulfide.

It belongs to the Cu-Zn superoxide dismutase family.

Its subcellular location is the virion. It is found in the host cytoplasm. In terms of biological role, superoxide dismutase-like protein with no enzymatic activity. The polypeptide is Cu-Zn superoxide dismutase-like protein OPG175 (OPG175) (Vaccinia virus (strain Tashkent) (VACV)).